We begin with the raw amino-acid sequence, 257 residues long: Putative B3 domain-containing protein At2g27410 (257 aa).

Residues Ala-5–Ser-50 form a disordered region. Residues Thr-8–Thr-35 are compositionally biased toward polar residues. A DNA-binding region (TF-B3) is located at residues Thr-115 to Asn-209. Positions Arg-212–Ser-257 are disordered. The segment covering Ser-241–Ser-257 has biased composition (low complexity).

It is found in the nucleus. This chain is Putative B3 domain-containing protein At2g27410, found in Arabidopsis thaliana (Mouse-ear cress).